Consider the following 65-residue polypeptide: Small ribosomal subunit protein bS21 (65 aa).

Residues 33-42 (RRREHYEKPS) show a composition bias toward basic and acidic residues. Residues 33–65 (RRREHYEKPSVKRKRKEAARLRKLQKMAREANN) form a disordered region. The span at 43 to 58 (VKRKRKEAARLRKLQK) shows a compositional bias: basic residues.

Belongs to the bacterial ribosomal protein bS21 family.

The sequence is that of Small ribosomal subunit protein bS21 from Herpetosiphon aurantiacus (strain ATCC 23779 / DSM 785 / 114-95).